The following is a 163-amino-acid chain: Secretory-abundant heat soluble protein 53582 (163 aa).

The signal sequence occupies residues 1–19 (MARLFVAVALFGVVAFAAA). Residues 22 to 51 (EWTGKTWLGSWASTDRAENWEAFVDALGLP) are SAHS-c1. An SAHS-c2 region spans residues 67 to 95 (YKQGDKYHHEVSIPSKNFKKAIEYTLGTE). The tract at residues 108–157 (KYTEDGEKLVADVQIPSKNKQIHDIYEVQGDTLTKTYKVGDVVAKRWFTR) is SAHS-c3.

Belongs to the Secretory-abundant heat soluble protein (SAHS) family.

The protein localises to the secreted. In terms of biological role, secreted heat soluble protein acting as a molecular shield in water-deficient condition. Tardigrade-specific intrinsically disordered proteins (TDPs) are essential for desiccation tolerance by forming non-crystalline amorphous solids upon desiccation, and this vitrified state mirrors their protective capabilities. The chain is Secretory-abundant heat soluble protein 53582 from Hypsibius exemplaris (Freshwater tardigrade).